The primary structure comprises 482 residues: 2-succinylbenzoate--CoA ligase (482 aa).

This sequence belongs to the ATP-dependent AMP-binding enzyme family. MenE subfamily.

The catalysed reaction is 2-succinylbenzoate + ATP + CoA = 2-succinylbenzoyl-CoA + AMP + diphosphate. Its pathway is quinol/quinone metabolism; 1,4-dihydroxy-2-naphthoate biosynthesis; 1,4-dihydroxy-2-naphthoate from chorismate: step 5/7. It participates in quinol/quinone metabolism; menaquinone biosynthesis. Functionally, converts 2-succinylbenzoate (OSB) to 2-succinylbenzoyl-CoA (OSB-CoA). This is 2-succinylbenzoate--CoA ligase from Bacillus cereus (strain AH820).